The primary structure comprises 525 residues: Asparagine synthetase [glutamine-hydrolyzing] (525 aa).

Catalysis depends on Cys2, which acts as the For GATase activity. Positions 2–185 (CGILAVLGCS…PGHLYSSKEG (184 aa)) constitute a Glutamine amidotransferase type-2 domain. L-glutamine-binding positions include 50 to 54 (RLAII), 75 to 77 (NGE), and Asp98. Residues 193 to 517 (PPWFSEVIPS…QIDSPWRSKC (325 aa)) form the Asparagine synthetase domain. Residues Leu231, Val267, and 341–342 (SG) each bind ATP.

It carries out the reaction L-aspartate + L-glutamine + ATP + H2O = L-asparagine + L-glutamate + AMP + diphosphate + H(+). It functions in the pathway amino-acid biosynthesis; L-asparagine biosynthesis; L-asparagine from L-aspartate (L-Gln route): step 1/1. Could play a role in remobilization of nitrogen in flowers during senescence. This chain is Asparagine synthetase [glutamine-hydrolyzing] (AND1), found in Sandersonia aurantiaca (Christmas-bells).